Consider the following 88-residue polypeptide: MSSTWIKFLFILTLVLLPYFVAESAVASPESLRKVPNCTLYKSESDCSRTLIPVCADNQMTYYNACYFCLEQLVSPIKYKYHGICTKE.

A signal peptide spans 1 to 24; that stretch reads MSSTWIKFLFILTLVLLPYFVAES. One can recognise a Kazal-like domain in the interval 32 to 87; it reads LRKVPNCTLYKSESDCSRTLIPVCADNQMTYYNACYFCLEQLVSPIKYKYHGICTK. N-linked (GlcNAc...) asparagine glycosylation occurs at N37. Cystine bridges form between C38/C69, C47/C66, and C55/C85.

In terms of tissue distribution, expressed in epydiymis, in the caput. Also expressed in seminal vesicles.

It is found in the secreted. Its function is as follows. Probable serine protease inhibitor. The protein is Serine protease inhibitor Kazal-type 11 (Spink11) of Mus musculus (Mouse).